We begin with the raw amino-acid sequence, 154 residues long: Protein X (154 aa).

The mitochondrial targeting sequence stretch occupies residues 68 to 117 (PCALRFTSARRMETTVNAHQILPKVLHKRTLGLSAMSTTDLEAYFKACLF).

This sequence belongs to the orthohepadnavirus protein X family. In terms of assembly, may form homodimer. May interact with host CEBPA, CFLAR, CREB1, DDB1, E4F1, HBXIP, HSPD1/HSP60, NFKBIA, POLR2E and SMAD4. Interacts with host SMC5-SMC6 complex and induces its degradation. Interacts with host TRPC4AP; leading to prevent ubiquitination of TRPC4AP. Interacts with host PLSCR1; this interaction promotes ubiquitination and degradation of HBx and impairs HBx-mediated cell proliferation. Post-translationally, a fraction may be phosphorylated in insect cells and HepG2 cells, a human hepatoblastoma cell line. Phosphorylated in vitro by host protein kinase C or mitogen-activated protein kinase. N-acetylated in insect cells.

It localises to the host cytoplasm. The protein resides in the host nucleus. It is found in the host mitochondrion. In terms of biological role, multifunctional protein that plays a role in silencing host antiviral defenses and promoting viral transcription. Does not seem to be essential for HBV infection. May be directly involved in development of cirrhosis and liver cancer (hepatocellular carcinoma). Most of cytosolic activities involve modulation of cytosolic calcium. The effect on apoptosis is controversial depending on the cell types in which the studies have been conducted. May induce apoptosis by localizing in mitochondria and causing loss of mitochondrial membrane potential. May also modulate apoptosis by binding host CFLAR, a key regulator of the death-inducing signaling complex (DISC). Promotes viral transcription by using the host E3 ubiquitin ligase DDB1 to target the SMC5-SMC6 complex to proteasomal degradation. This host complex would otherwise bind to viral episomal DNA, and prevents its transcription. Moderately stimulates transcription of many different viral and cellular transcription elements. Promoters and enhancers stimulated by HBx contain DNA binding sites for NF-kappa-B, AP-1, AP-2, c-EBP, ATF/CREB, or the calcium-activated factor NF-AT. The polypeptide is Protein X (Hepatitis B virus genotype E (isolate Cote d'Ivoire/ABI-129/2003) (HBV-E)).